A 1262-amino-acid chain; its full sequence is Separin homolog sep-1 (1262 aa).

Residues 957-1051 (VQNAYYILDP…SVRTIPQALG (95 aa)) form the Peptidase C50 domain. C1040 is an active-site residue. The tract at residues 1147-1262 (KDQRNLPQTP…ARTPSRSRNL (116 aa)) is disordered. Composition is skewed to polar residues over residues 1151 to 1162 (NLPQTPKTSART) and 1177 to 1197 (FVTSKSVPMTPIFSNNENKSP). Residues 1243–1262 (TPTTRTTRSSARTPSRSRNL) show a composition bias toward low complexity.

In terms of assembly, forms a complex with securin-like protein ify-1 (via C-terminus). Interaction with ify-1 stabilizes sep-1. Also maintains the complex in the cytoplasm during interphase and recruits it to chromosomes during the first meiotic division. In terms of tissue distribution, expressed in oocytes. Expressed in male germline. Expressed in spermatocytes but undetectable in spermatids (at protein level).

Its subcellular location is the cytoplasm. The protein localises to the chromosome. The protein resides in the cytoplasmic granule. It localises to the cytoskeleton. It is found in the microtubule organizing center. Its subcellular location is the centrosome. The protein localises to the spindle. The protein resides in the cleavage furrow. It localises to the midbody. It catalyses the reaction All bonds known to be hydrolyzed by this endopeptidase have arginine in P1 and an acidic residue in P4. P6 is often occupied by an acidic residue or by a hydroxy-amino-acid residue, the phosphorylation of which enhances cleavage.. With respect to regulation, probably maintained in an inactive state via its interaction with securin ify-1 which acts as a pseudosubstrate thereby blocking access to the catalytic site. Upon ify-1 degradation at the onset of anaphase, sep-1 is likely to become active. In addition, interaction with ify-1 stabilizes sep-1. In terms of biological role, cysteine protease, which plays a central role in homologous chromosome separation during meiosis I and in sister chromatid separation during embryonic mitosis. Promotes chromosome/sister chromatid segregation by cleaving the scc-1 (mitosis) and rec-8 (meiosis) subunits of the cohesin complex at the onset of anaphase. May cleave histone H3-like protein cpar-1 during meiosis I metaphase-anaphase transition. Promotes cortical granule exocytosis after oocyte fertilization during the first meiotic anaphase. Essential for embryonic cytokinesis by regulating rab-11-positive vesicle trafficking at the plasma membrane at the cleavage furrow and midbody. Regulates centriole segregation during spermatocyte meiosis. Required for embryonic anterior-posterior axis formation. This chain is Separin homolog sep-1, found in Caenorhabditis elegans.